The primary structure comprises 250 residues: MIYIKNPNEIQKIKNAAQIYKKIVKQFNFDYIKNKSLKEIDQMLRDFVSQHHANSCYHGYLGFKGYHCLSLNQTIIHGLANDEIFTSKDKLTIDIGIELDNYYCDSAFTILGPDVNPRQKLLSEVTHNCIFELVKKIVPNQTTTNDLGIWTEEYAKKYGYSVIKDFGGHGCGIKIHEDPIILNYGTKKSSELLTPNMVICIEPMFFEKDNRYYIDPDDSWSVKPVNKNQYVCHWEHMVLIKEDQAEILTL.

H77 contributes to the substrate binding site. The a divalent metal cation site is built by D94, D105, and H169. Residue H176 participates in substrate binding. Residues E202 and E235 each coordinate a divalent metal cation.

Belongs to the peptidase M24A family. Methionine aminopeptidase type 1 subfamily. Monomer. Co(2+) serves as cofactor. Requires Zn(2+) as cofactor. The cofactor is Mn(2+). Fe(2+) is required as a cofactor.

The enzyme catalyses Release of N-terminal amino acids, preferentially methionine, from peptides and arylamides.. In terms of biological role, removes the N-terminal methionine from nascent proteins. The N-terminal methionine is often cleaved when the second residue in the primary sequence is small and uncharged (Met-Ala-, Cys, Gly, Pro, Ser, Thr, or Val). Requires deformylation of the N(alpha)-formylated initiator methionine before it can be hydrolyzed. The protein is Methionine aminopeptidase of Mycoplasmoides gallisepticum (strain R(low / passage 15 / clone 2)) (Mycoplasma gallisepticum).